Here is a 202-residue protein sequence, read N- to C-terminus: dITP/XTP pyrophosphatase (202 aa).

Substrate is bound at residue 9 to 14 (TGNKGK). The Proton acceptor role is filled by Asp-73. Asp-73 provides a ligand contact to Mg(2+). Substrate is bound by residues Ser-74, 158 to 161 (FGYD), Lys-181, and 186 to 187 (HR).

It belongs to the HAM1 NTPase family. In terms of assembly, homodimer. Requires Mg(2+) as cofactor.

It carries out the reaction XTP + H2O = XMP + diphosphate + H(+). The enzyme catalyses dITP + H2O = dIMP + diphosphate + H(+). It catalyses the reaction ITP + H2O = IMP + diphosphate + H(+). Pyrophosphatase that catalyzes the hydrolysis of nucleoside triphosphates to their monophosphate derivatives, with a high preference for the non-canonical purine nucleotides XTP (xanthosine triphosphate), dITP (deoxyinosine triphosphate) and ITP. Seems to function as a house-cleaning enzyme that removes non-canonical purine nucleotides from the nucleotide pool, thus preventing their incorporation into DNA/RNA and avoiding chromosomal lesions. This Lactobacillus acidophilus (strain ATCC 700396 / NCK56 / N2 / NCFM) protein is dITP/XTP pyrophosphatase.